A 425-amino-acid chain; its full sequence is 3-phosphoshikimate 1-carboxyvinyltransferase (425 aa).

3-phosphoshikimate-binding residues include Lys-22, Ser-23, and Arg-27. Residue Lys-22 coordinates phosphoenolpyruvate. Phosphoenolpyruvate-binding residues include Gly-95 and Arg-123. 7 residues coordinate 3-phosphoshikimate: Ser-169, Ser-170, Gln-171, Ser-197, Asp-313, Asn-336, and Lys-340. A phosphoenolpyruvate-binding site is contributed by Gln-171. The Proton acceptor role is filled by Asp-313. The phosphoenolpyruvate site is built by Arg-344, Arg-386, and Lys-411.

Belongs to the EPSP synthase family. Monomer.

Its subcellular location is the cytoplasm. It catalyses the reaction 3-phosphoshikimate + phosphoenolpyruvate = 5-O-(1-carboxyvinyl)-3-phosphoshikimate + phosphate. The protein operates within metabolic intermediate biosynthesis; chorismate biosynthesis; chorismate from D-erythrose 4-phosphate and phosphoenolpyruvate: step 6/7. Its function is as follows. Catalyzes the transfer of the enolpyruvyl moiety of phosphoenolpyruvate (PEP) to the 5-hydroxyl of shikimate-3-phosphate (S3P) to produce enolpyruvyl shikimate-3-phosphate and inorganic phosphate. The sequence is that of 3-phosphoshikimate 1-carboxyvinyltransferase from Marinomonas sp. (strain MWYL1).